The following is a 202-amino-acid chain: Dephospho-CoA kinase (202 aa).

Positions 6–202 (KVSITGDLSS…EYFYALKGAL (197 aa)) constitute a DPCK domain. Residue 14–19 (SSGKTE) coordinates ATP.

The protein belongs to the CoaE family.

The protein resides in the cytoplasm. It carries out the reaction 3'-dephospho-CoA + ATP = ADP + CoA + H(+). It functions in the pathway cofactor biosynthesis; coenzyme A biosynthesis; CoA from (R)-pantothenate: step 5/5. Catalyzes the phosphorylation of the 3'-hydroxyl group of dephosphocoenzyme A to form coenzyme A. The polypeptide is Dephospho-CoA kinase (Chlamydia abortus (strain DSM 27085 / S26/3) (Chlamydophila abortus)).